Reading from the N-terminus, the 591-residue chain is L-fucose isomerase (591 aa).

Active-site proton acceptor residues include Glu-337 and Asp-361. Positions 337, 361, and 528 each coordinate Mn(2+).

It belongs to the L-fucose isomerase family. In terms of assembly, homohexamer. The cofactor is Mn(2+).

It localises to the cytoplasm. It carries out the reaction L-fucose = L-fuculose. It functions in the pathway carbohydrate degradation; L-fucose degradation; L-lactaldehyde and glycerone phosphate from L-fucose: step 1/3. Functionally, converts the aldose L-fucose into the corresponding ketose L-fuculose. In Escherichia coli O6:H1 (strain CFT073 / ATCC 700928 / UPEC), this protein is L-fucose isomerase.